The following is a 215-amino-acid chain: Cytochrome b6 (215 aa).

A helical transmembrane segment spans residues 32–52 (IFYCFGGIVFTCFLVQVATGF). Cys35 contacts heme c. Positions 86 and 100 each coordinate heme b. Helical transmembrane passes span 90–110 (ASMM…TGGF), 116–136 (LTWV…VTGY), and 186–206 (AHTF…FLMI). Heme b contacts are provided by His187 and His202.

This sequence belongs to the cytochrome b family. PetB subfamily. In terms of assembly, the 4 large subunits of the cytochrome b6-f complex are cytochrome b6, subunit IV (17 kDa polypeptide, PetD), cytochrome f and the Rieske protein, while the 4 small subunits are PetG, PetL, PetM and PetN. The complex functions as a dimer. Heme b is required as a cofactor. Heme c serves as cofactor.

The protein resides in the plastid. Its subcellular location is the chloroplast thylakoid membrane. Functionally, component of the cytochrome b6-f complex, which mediates electron transfer between photosystem II (PSII) and photosystem I (PSI), cyclic electron flow around PSI, and state transitions. In Skeletonema costatum (Marine centric diatom), this protein is Cytochrome b6.